A 491-amino-acid polypeptide reads, in one-letter code: MNNQPKTVRVRMAPSPTGSPHVGLVRTALFNWAFARHHHGTFVFRIEDTDRERSTQESYDAIIDLMRWLGLDWDEGPEVGGPHAPYFQSERGDIYRDALARLAESSYTYDCFCTNEEVDARRKASGSKVMGYDGFCRDLSTEQRAAFEAEGRRPVVRFRMPDGSITWHDLVRGDVTFETRFVPDYALCRANGDPLYTLVNPVDDAYMEITHVLRGEDLLSSTPRQIALYAALEELGIAKATPEFGHLPYVMGEGNKKLSKRDPEAHALAYRDQGFLPEGLLNYLALLGWAIAADRDVFSMEEMVAAFDIADVNPNPARFDMKKAEAINAAHMRLLSLDVMTERVLPFLKGAGVLSDPVNPADTQLLELAMPLVAERINKLTESVDMLGFLFVDEESFTRDEADAEKLLNDDGRAVVRRALDALERVGEWSTGAIQDALQAELVEAMGVKPRNAFGPVRVAVTGRRVSPPLFESMELLGRDRSLARLRSALG.

Positions 14–24 (PSPTGSPHVGL) match the 'HIGH' region motif. Zn(2+) is bound by residues Cys111, Cys113, Cys136, and Asp138. A 'KMSKS' region motif is present at residues 257 to 261 (KLSKR). ATP is bound at residue Lys260.

Belongs to the class-I aminoacyl-tRNA synthetase family. Glutamate--tRNA ligase type 1 subfamily. Monomer. Requires Zn(2+) as cofactor.

It is found in the cytoplasm. It carries out the reaction tRNA(Glu) + L-glutamate + ATP = L-glutamyl-tRNA(Glu) + AMP + diphosphate. Its function is as follows. Catalyzes the attachment of glutamate to tRNA(Glu) in a two-step reaction: glutamate is first activated by ATP to form Glu-AMP and then transferred to the acceptor end of tRNA(Glu). In Nocardioides sp. (strain ATCC BAA-499 / JS614), this protein is Glutamate--tRNA ligase.